The primary structure comprises 283 residues: Thymidylate synthase (283 aa).

Position 22 (Arg-22) interacts with dUMP. Cys-160 serves as the catalytic Nucleophile. Residues 180–183 (RSCD), Asn-191, and 221–223 (HIY) contribute to the dUMP site. Asp-183 serves as a coordination point for (6R)-5,10-methylene-5,6,7,8-tetrahydrofolate. (6R)-5,10-methylene-5,6,7,8-tetrahydrofolate is bound at residue Ser-282.

This sequence belongs to the thymidylate synthase family. Bacterial-type ThyA subfamily. In terms of assembly, homodimer.

Its subcellular location is the cytoplasm. It catalyses the reaction dUMP + (6R)-5,10-methylene-5,6,7,8-tetrahydrofolate = 7,8-dihydrofolate + dTMP. It functions in the pathway pyrimidine metabolism; dTTP biosynthesis. Its function is as follows. Catalyzes the reductive methylation of 2'-deoxyuridine-5'-monophosphate (dUMP) to 2'-deoxythymidine-5'-monophosphate (dTMP) while utilizing 5,10-methylenetetrahydrofolate (mTHF) as the methyl donor and reductant in the reaction, yielding dihydrofolate (DHF) as a by-product. This enzymatic reaction provides an intracellular de novo source of dTMP, an essential precursor for DNA biosynthesis. This is Thymidylate synthase from Haemophilus influenzae (strain 86-028NP).